Consider the following 306-residue polypeptide: Leucotoxin LukEv (306 aa).

Residues 1 to 23 form the signal peptide; the sequence is MLAATLSVGLIAPLASPIQESRA.

It belongs to the aerolysin family. As to quaternary structure, toxicity requires sequential binding and synergistic association of a class S and a class F component which form heterooligomeric complexes. LukEv (class S) associates with LukDv (class F).

It is found in the secreted. Its function is as follows. Part of a bi-component leucotoxin that acts by forming pores in the membrane of the target cells. The activity of LukEv-LukDv to rabbit leukocytes is similar to that of the Panton-Valentine leucocidin (PVL). LukEv-LukDv is hemolytic to rabbit red blood cells although the activity is only 8% of gamma-hemolysin. The chain is Leucotoxin LukEv (lukEv) from Staphylococcus aureus (strain NCTC 8325 / PS 47).